The primary structure comprises 185 residues: Ribosome-recycling factor (185 aa).

This sequence belongs to the RRF family.

It localises to the cytoplasm. Responsible for the release of ribosomes from messenger RNA at the termination of protein biosynthesis. May increase the efficiency of translation by recycling ribosomes from one round of translation to another. The polypeptide is Ribosome-recycling factor (Vesicomyosocius okutanii subsp. Calyptogena okutanii (strain HA)).